A 154-amino-acid chain; its full sequence is Putative lipoprotein MAB_4074c (154 aa).

The first 21 residues, 1 to 21, serve as a signal peptide directing secretion; the sequence is MMNRVIVGAMGLLAAGAVVVG. Cys22 is lipidated: N-palmitoyl cysteine. The S-diacylglycerol cysteine moiety is linked to residue Cys22.

Belongs to the mycobacterial 19 kDa antigen family.

The protein localises to the cell membrane. In Mycobacteroides abscessus (strain ATCC 19977 / DSM 44196 / CCUG 20993 / CIP 104536 / JCM 13569 / NCTC 13031 / TMC 1543 / L948) (Mycobacterium abscessus), this protein is Putative lipoprotein MAB_4074c.